We begin with the raw amino-acid sequence, 350 residues long: Neurogenic differentiation factor 1 (350 aa).

The tract at residues 1-91 (MTKSYSEESM…KKKKMTKARM (91 aa)) is disordered. A compositionally biased stretch (low complexity) spans 7–18 (EESMMLESQSSS). Residues 22–38 (DKCHSSSQDERDVDKTS) show a composition bias toward basic and acidic residues. The segment covering 44 to 72 (DMEDDDDAGLNRLEDEDDEEEEEEEEDGD) has biased composition (acidic residues). The span at 76–91 (PKRRGPKKKKMTKARM) shows a compositional bias: basic residues. Residues 82–88 (KKKKMTK) carry the Nuclear localization signal motif. Positions 96-148 (MRRMKANARERNRMHGLNDALESLRKVVPCYSKTQKLSKIETLRLAKNYIWAL) constitute a bHLH domain.

In terms of assembly, efficient DNA binding requires dimerization with another bHLH protein. In the embryo, expressed broadly in a subset of primary neurons in the brain and spinal cord. At 28 hours post-fertilization (hpf), regions of expression include telencephalon, olfactory placode, epiphysis, cranial ganglia, acoustic ganglia, Rohon-Beard mechano-sensory neurons and motoneurons. In 2 day postembryonic brain, expressed in many brain regions but absent from subpallium, the ventral preoptic region, ventral thalamus and hypothalamus; sites of expression extend laterally from the ventricular proliferative regions and correspond to freshly determined cell populations. In adult, expressed in all tissues examined with highest levels in brain.

Its subcellular location is the cytoplasm. It is found in the nucleus. Its function is as follows. May act as a transcriptional activator. Differentiation factor required for neurogenesis. Acts as an upstream activator of isl1. This Danio rerio (Zebrafish) protein is Neurogenic differentiation factor 1.